Reading from the N-terminus, the 552-residue chain is Chaperonin GroEL 3 (552 aa).

Residues 30-33, Lys-51, 87-91, Gly-415, and Asp-495 contribute to the ATP site; these read TLGP and DGTTT.

Belongs to the chaperonin (HSP60) family. As to quaternary structure, forms a cylinder of 14 subunits composed of two heptameric rings stacked back-to-back. Interacts with the co-chaperonin GroES.

It is found in the cytoplasm. It carries out the reaction ATP + H2O + a folded polypeptide = ADP + phosphate + an unfolded polypeptide.. In terms of biological role, together with its co-chaperonin GroES, plays an essential role in assisting protein folding. The GroEL-GroES system forms a nano-cage that allows encapsulation of the non-native substrate proteins and provides a physical environment optimized to promote and accelerate protein folding. The protein is Chaperonin GroEL 3 of Mesorhizobium japonicum (strain LMG 29417 / CECT 9101 / MAFF 303099) (Mesorhizobium loti (strain MAFF 303099)).